Reading from the N-terminus, the 1172-residue chain is DNA-directed RNA polymerases IV and V subunit 2 (1172 aa).

Residue aspartate 786 coordinates Mg(2+). Zn(2+) is bound by residues cysteine 1108, cysteine 1111, cysteine 1133, and cysteine 1136. The C4-type zinc-finger motif lies at cysteine 1108 to cysteine 1136.

This sequence belongs to the RNA polymerase beta chain family. In terms of assembly, component of the RNA polymerase IV and V complexes. Interacts with SSH1, NRPD1 and NRPE1. Mostly expressed in seedlings, flowers and roots, present ubiquitously, except in sperm cells.

Its subcellular location is the nucleus. The catalysed reaction is RNA(n) + a ribonucleoside 5'-triphosphate = RNA(n+1) + diphosphate. Functionally, DNA-dependent RNA polymerase catalyzes the transcription of DNA into RNA using the four ribonucleoside triphosphates as substrates. Second largest component of RNA polymerases IV and V which mediate short-interfering RNAs (siRNA) accumulation and subsequent RNA-directed DNA methylation-dependent (RdDM) transcriptional gene silencing (TGS) of endogenous repeated sequences, including transposable elements. Proposed to contribute to the polymerase catalytic activity and forms the polymerase active center together with the largest subunit. Also required for full erasure of methylation when the RNA trigger is withdrawn. Required for intercellular RNA interference (RNAi) leading to systemic post-transcriptional gene silencing. Involved in the maintenance of post-transcriptional RNA silencing. During interphase, mediates siRNA-independent heterochromatin association and methylation into chromocenters and condensation and cytosine methylation at pericentromeric major repeats. Required for complete maintenance of the 35S promoter homology-dependent TGS in transgenic plants and for the initial establishment of DNA methylation. The protein is DNA-directed RNA polymerases IV and V subunit 2 (NRPD2) of Arabidopsis thaliana (Mouse-ear cress).